The following is a 251-amino-acid chain: Hydroxyacylglutathione hydrolase (251 aa).

Zn(2+) is bound by residues His53, His55, Asp57, His58, His110, Asp127, and His165.

The protein belongs to the metallo-beta-lactamase superfamily. Glyoxalase II family. As to quaternary structure, monomer. Requires Zn(2+) as cofactor.

The enzyme catalyses an S-(2-hydroxyacyl)glutathione + H2O = a 2-hydroxy carboxylate + glutathione + H(+). It participates in secondary metabolite metabolism; methylglyoxal degradation; (R)-lactate from methylglyoxal: step 2/2. Functionally, thiolesterase that catalyzes the hydrolysis of S-D-lactoyl-glutathione to form glutathione and D-lactic acid. The sequence is that of Hydroxyacylglutathione hydrolase from Citrobacter koseri (strain ATCC BAA-895 / CDC 4225-83 / SGSC4696).